We begin with the raw amino-acid sequence, 123 residues long: N(4)-acetylcytidine amidohydrolase (123 aa).

Residues I6–S101 enclose the ASCH domain. Residue K21 is the Proton acceptor of the active site. S24 acts as the Nucleophile in catalysis. Catalysis depends on E74, which acts as the Proton donor.

Belongs to the N(4)-acetylcytidine amidohydrolase family.

It catalyses the reaction N(4)-acetylcytidine + H2O = cytidine + acetate + H(+). It carries out the reaction N(4)-acetyl-2'-deoxycytidine + H2O = 2'-deoxycytidine + acetate + H(+). The catalysed reaction is N(4)-acetylcytosine + H2O = cytosine + acetate + H(+). Catalyzes the hydrolysis of N(4)-acetylcytidine (ac4C). The sequence is that of N(4)-acetylcytidine amidohydrolase from Haemophilus influenzae (strain ATCC 51907 / DSM 11121 / KW20 / Rd).